The chain runs to 382 residues: Dual-specificity RNA methyltransferase RlmN (382 aa).

Glu-96 (proton acceptor) is an active-site residue. One can recognise a Radical SAM core domain in the interval 102–342; it reads QGKRGTLCVS…VRTTRGEDID (241 aa). Cys-109 and Cys-345 form a disulfide bridge. Positions 116, 120, and 123 each coordinate [4Fe-4S] cluster. S-adenosyl-L-methionine contacts are provided by residues 170-171, Ser-202, 224-226, and Asn-302; these read GE and SLH. The active-site S-methylcysteine intermediate is Cys-345.

It belongs to the radical SAM superfamily. RlmN family. It depends on [4Fe-4S] cluster as a cofactor.

Its subcellular location is the cytoplasm. The catalysed reaction is adenosine(2503) in 23S rRNA + 2 reduced [2Fe-2S]-[ferredoxin] + 2 S-adenosyl-L-methionine = 2-methyladenosine(2503) in 23S rRNA + 5'-deoxyadenosine + L-methionine + 2 oxidized [2Fe-2S]-[ferredoxin] + S-adenosyl-L-homocysteine. The enzyme catalyses adenosine(37) in tRNA + 2 reduced [2Fe-2S]-[ferredoxin] + 2 S-adenosyl-L-methionine = 2-methyladenosine(37) in tRNA + 5'-deoxyadenosine + L-methionine + 2 oxidized [2Fe-2S]-[ferredoxin] + S-adenosyl-L-homocysteine. Functionally, specifically methylates position 2 of adenine 2503 in 23S rRNA and position 2 of adenine 37 in tRNAs. m2A2503 modification seems to play a crucial role in the proofreading step occurring at the peptidyl transferase center and thus would serve to optimize ribosomal fidelity. The chain is Dual-specificity RNA methyltransferase RlmN from Pseudomonas syringae pv. syringae (strain B728a).